The primary structure comprises 111 residues: MMTLRDLINKLLGRETASANTARERLQLVLAHDRVDMSSLTTDLLDKMRKEILDVVAKYVEIDFEEVAVSLETEDRMTALVANLPIKRTISGEIKFKKNDKTDQADKDIKK.

Belongs to the MinE family.

Functionally, prevents the cell division inhibition by proteins MinC and MinD at internal division sites while permitting inhibition at polar sites. This ensures cell division at the proper site by restricting the formation of a division septum at the midpoint of the long axis of the cell. In Prochlorococcus marinus (strain MIT 9312), this protein is Cell division topological specificity factor.